A 310-amino-acid polypeptide reads, in one-letter code: HTH-type transcriptional activator TtdR (310 aa).

The HTH lysR-type domain maps to 6–63 (PLAKDLQVLVEIVHSGSFSAAAATLGQTPAFVTKRIQILENTLATTLLNRSARGVALT). The segment at residues 23-42 (FSAAAATLGQTPAFVTKRIQ) is a DNA-binding region (H-T-H motif).

This sequence belongs to the LysR transcriptional regulatory family.

In terms of biological role, positive regulator required for L-tartrate-dependent anaerobic growth on glycerol. Induces expression of the ttdA-ttdB-ygjE operon. This is HTH-type transcriptional activator TtdR (ttdR) from Escherichia coli O6:H1 (strain CFT073 / ATCC 700928 / UPEC).